Consider the following 65-residue polypeptide: Light-harvesting protein B800/830/1020 beta-2 chain (65 aa).

Residues 1 to 17 are Cytoplasmic-facing; sequence TDIRTGLTDEECQEIHE. His16 and Asn34 together coordinate a bacteriochlorophyll. A helical membrane pass occupies residues 18-40; the sequence is MNMLGMHAYWSIGLIANALAYAW. Residues 41–65 lie on the Periplasmic side of the membrane; it reads RPFHQGRAGNRLEDHAPDYVRSALT.

This sequence belongs to the antenna complex beta subunit family. As to quaternary structure, the core complex is formed by different alpha and beta chains, binding bacteriochlorophyll molecules, and arranged most probably in tetrameric structures disposed around the reaction center. The non-pigmented gamma chains may constitute additional components.

It localises to the cell inner membrane. Functionally, antenna complexes are light-harvesting systems, which transfer the excitation energy to the reaction centers. The polypeptide is Light-harvesting protein B800/830/1020 beta-2 chain (Halorhodospira halochloris (Ectothiorhodospira halochloris)).